The chain runs to 194 residues: Large ribosomal subunit protein eL15 (194 aa).

The interval 165–194 is disordered; sequence AGKKGRGLMNKGKGAEKVRPGIRANKKLGK.

This sequence belongs to the eukaryotic ribosomal protein eL15 family.

The protein is Large ribosomal subunit protein eL15 of Methanococcus aeolicus (strain ATCC BAA-1280 / DSM 17508 / OCM 812 / Nankai-3).